Here is a 97-residue protein sequence, read N- to C-terminus: UPF0147 protein MA_0092 (97 aa).

Belongs to the UPF0147 family.

The sequence is that of UPF0147 protein MA_0092 from Methanosarcina acetivorans (strain ATCC 35395 / DSM 2834 / JCM 12185 / C2A).